The primary structure comprises 549 residues: Oxygen-dependent choline dehydrogenase (549 aa).

4–33 (DFVIIGSGSAGSAMAYRLSEDGRYSVIVIE) lines the FAD pocket. The Proton acceptor role is filled by His-465.

The protein belongs to the GMC oxidoreductase family. It depends on FAD as a cofactor.

The enzyme catalyses choline + A = betaine aldehyde + AH2. It carries out the reaction betaine aldehyde + NAD(+) + H2O = glycine betaine + NADH + 2 H(+). It functions in the pathway amine and polyamine biosynthesis; betaine biosynthesis via choline pathway; betaine aldehyde from choline (cytochrome c reductase route): step 1/1. Involved in the biosynthesis of the osmoprotectant glycine betaine. Catalyzes the oxidation of choline to betaine aldehyde and betaine aldehyde to glycine betaine at the same rate. In Brucella melitensis biotype 1 (strain ATCC 23456 / CCUG 17765 / NCTC 10094 / 16M), this protein is Oxygen-dependent choline dehydrogenase.